The chain runs to 131 residues: Small ribosomal subunit protein uS8 (131 aa).

This sequence belongs to the universal ribosomal protein uS8 family. As to quaternary structure, part of the 30S ribosomal subunit. Contacts proteins S5 and S12.

Functionally, one of the primary rRNA binding proteins, it binds directly to 16S rRNA central domain where it helps coordinate assembly of the platform of the 30S subunit. The sequence is that of Small ribosomal subunit protein uS8 from Cupriavidus metallidurans (strain ATCC 43123 / DSM 2839 / NBRC 102507 / CH34) (Ralstonia metallidurans).